The chain runs to 137 residues: Large ribosomal subunit protein uL16 (137 aa).

This sequence belongs to the universal ribosomal protein uL16 family. As to quaternary structure, part of the 50S ribosomal subunit.

Its function is as follows. Binds 23S rRNA and is also seen to make contacts with the A and possibly P site tRNAs. This is Large ribosomal subunit protein uL16 from Pseudomonas aeruginosa (strain LESB58).